A 142-amino-acid chain; its full sequence is Type II secretion system core protein G (142 aa).

Positions 1–8 (MQRRQQSG) are cleaved as a propeptide — leader sequence. Residue F9 is modified to N-methylphenylalanine. Residues 9 to 29 (FTLIEIMVVVVILGILAALVV) form a helical membrane-spanning segment. The interval 121–142 (SLGADGKEGGSDNDADIGNWDN) is disordered.

This sequence belongs to the GSP G family. Type II secretion system is composed of four main components: the outer membrane complex, the inner membrane complex, the cytoplasmic secretion ATPase and the periplasm-spanning pseudopilus. Forms homomultimers. Interacts with pseudopilin tip ternary complex made of XcpX, XcpU, XcpV and XcpW. Interacts with PilA. Post-translationally, cleaved by the prepilin peptidase. Methylated by prepilin peptidase at the amino group of the N-terminal phenylalanine once the leader sequence is cleaved.

It is found in the cell inner membrane. Core component of the type II secretion system required for the energy-dependent secretion of extracellular factors such as proteases and toxins from the periplasm. Pseudopilin (pilin-like) protein that polymerizes to form the pseudopilus. Further polymerization triggers pseudopilus growth. Type II pseudopilus confers increased bacterial adhesive capabilities. The chain is Type II secretion system core protein G (xcpT) from Pseudomonas aeruginosa (strain ATCC 15692 / DSM 22644 / CIP 104116 / JCM 14847 / LMG 12228 / 1C / PRS 101 / PAO1).